Consider the following 237-residue polypeptide: Phosphoribosylaminoimidazole-succinocarboxamide synthase (237 aa).

This sequence belongs to the SAICAR synthetase family.

It carries out the reaction 5-amino-1-(5-phospho-D-ribosyl)imidazole-4-carboxylate + L-aspartate + ATP = (2S)-2-[5-amino-1-(5-phospho-beta-D-ribosyl)imidazole-4-carboxamido]succinate + ADP + phosphate + 2 H(+). The protein operates within purine metabolism; IMP biosynthesis via de novo pathway; 5-amino-1-(5-phospho-D-ribosyl)imidazole-4-carboxamide from 5-amino-1-(5-phospho-D-ribosyl)imidazole-4-carboxylate: step 1/2. The protein is Phosphoribosylaminoimidazole-succinocarboxamide synthase of Yersinia pseudotuberculosis serotype O:1b (strain IP 31758).